The primary structure comprises 299 residues: 4-diphosphocytidyl-2-C-methyl-D-erythritol kinase (299 aa).

K17 is a catalytic residue. 99-109 (PLASGLGGGSS) is an ATP binding site. Residue D142 is part of the active site.

This sequence belongs to the GHMP kinase family. IspE subfamily.

The catalysed reaction is 4-CDP-2-C-methyl-D-erythritol + ATP = 4-CDP-2-C-methyl-D-erythritol 2-phosphate + ADP + H(+). Its pathway is isoprenoid biosynthesis; isopentenyl diphosphate biosynthesis via DXP pathway; isopentenyl diphosphate from 1-deoxy-D-xylulose 5-phosphate: step 3/6. Its function is as follows. Catalyzes the phosphorylation of the position 2 hydroxy group of 4-diphosphocytidyl-2C-methyl-D-erythritol. This Deinococcus radiodurans (strain ATCC 13939 / DSM 20539 / JCM 16871 / CCUG 27074 / LMG 4051 / NBRC 15346 / NCIMB 9279 / VKM B-1422 / R1) protein is 4-diphosphocytidyl-2-C-methyl-D-erythritol kinase.